The chain runs to 541 residues: MAHKQVLFHSAAREKILRGASLLADAVRVTLGPKSKSVLIQKGWGAPIVCNDGVTIAKEFDLKDAEENLGAQVLRQLAEKTGDVVGDGTSTSTILAHAILSDGVRNVVAGASAIDLKRGLDRGTQAAIAALRAMATPVKSRAEKVQVATISAHNDASIGELVADAIEKVGGDGVISVEESKTTETLLDVVEGMKFDRGFLSPYFITDADRMESVLQDPYVLLCDHKIGALRDLVPLLEQVAKSGQPLLIIAEDIEGEALATLIVNQLRGVLKACAVKAPGFGDRRKAMLEDIAILTGAQVISEEIGLNLENATLQQLGRAARVVADKENTTLIGSGGDRTRIDARLGQIRVEIEKTTSDYDREKLEERLAKLSGGVAVIRVGAPTEAEMKAKKEALDDAISSTKAAVAEGIVPGGGLALLRAVAAVAKEEAACEGDERTGVQILRRALEAPARQIAENSAADGGVVVARMLEGEGSIGFDASRKVYVDLVAAGIVDPVKVVRTALENAVSVASVLLLTEATMTEIPEPKRERLPEPDLAVQ.

ATP contacts are provided by residues 30–33, Gly415, and Asp496; that span reads TLGP.

It belongs to the chaperonin (HSP60) family. Forms a cylinder of 14 subunits composed of two heptameric rings stacked back-to-back. Interacts with the co-chaperonin GroES.

It is found in the cytoplasm. The catalysed reaction is ATP + H2O + a folded polypeptide = ADP + phosphate + an unfolded polypeptide.. Its function is as follows. Together with its co-chaperonin GroES, plays an essential role in assisting protein folding. The GroEL-GroES system forms a nano-cage that allows encapsulation of the non-native substrate proteins and provides a physical environment optimized to promote and accelerate protein folding. The protein is Chaperonin GroEL 5 of Bradyrhizobium diazoefficiens (strain JCM 10833 / BCRC 13528 / IAM 13628 / NBRC 14792 / USDA 110).